Here is a 188-residue protein sequence, read N- to C-terminus: Putative glutamine amidotransferase-like protein YvdE homolog (188 aa).

The 172-residue stretch at 17–188 (SPFWWNKVSY…IKDLGQGLQA (172 aa)) folds into the Glutamine amidotransferase type-1 domain.

The polypeptide is Putative glutamine amidotransferase-like protein YvdE homolog (Lactococcus lactis subsp. cremoris (Streptococcus cremoris)).